Reading from the N-terminus, the 737-residue chain is ATP-dependent RNA helicase SUV3, mitochondrial (737 aa).

Residues 1–25 constitute a mitochondrion transit peptide; it reads MTLVKYSTIAFPLRSFRLFIFVKKA. The Helicase ATP-binding domain maps to 226 to 365; that stretch reads EARKIRRHII…KSVLPLVKSI (140 aa). 239-246 provides a ligand contact to ATP; the sequence is GPTNSGKT. The Helicase C-terminal domain occupies 390 to 546; the sequence is PVKDGIKGLR…YLKTAVTWPT (157 aa).

It belongs to the helicase family.

The protein localises to the mitochondrion. The enzyme catalyses ATP + H2O = ADP + phosphate + H(+). Probable ATP-dependent RNA helicase involved in a variety of mitochondrial post-transcriptional processes and in translation. It is a key control element in nuclear-mitochondrial interactions. The chain is ATP-dependent RNA helicase SUV3, mitochondrial (SUV3) from Saccharomyces paradoxus (Yeast).